The following is a 98-amino-acid chain: Integration host factor subunit alpha (98 aa).

A disordered region spans residues Leu54–Ser74.

This sequence belongs to the bacterial histone-like protein family. In terms of assembly, heterodimer of an alpha and a beta chain.

In terms of biological role, this protein is one of the two subunits of integration host factor, a specific DNA-binding protein that functions in genetic recombination as well as in transcriptional and translational control. The chain is Integration host factor subunit alpha from Actinobacillus succinogenes (strain ATCC 55618 / DSM 22257 / CCUG 43843 / 130Z).